Consider the following 479-residue polypeptide: Protein kinase 2 (479 aa).

A disordered region spans residues 1-136; sequence MGKGQSKIKN…NGNDDEDEGP (136 aa). 2 stretches are compositionally biased toward low complexity: residues 52-65 and 79-96; these read AQQQ…TTAA and IPAP…TPTI. Positions 102–115 are enriched in polar residues; it reads NTDNNNINGASNEA. The 255-residue stretch at 153–407 folds into the Protein kinase domain; that stretch reads FELLNVIGKG…GGEVKQHPWF (255 aa). ATP-binding positions include 159 to 167 and Lys182; that span reads IGKGSFGKV. Catalysis depends on Asp276, which acts as the Proton acceptor. Position 309 is a phosphothreonine; by autocatalysis (Thr309). Residues 408 to 479 form the AGC-kinase C-terminal domain; sequence KNIDWEKLDR…TYVADSILKD (72 aa). Phosphothreonine is present on Thr470.

The protein belongs to the protein kinase superfamily. AGC Ser/Thr protein kinase family. S6 kinase subfamily. In terms of processing, seems to be myristoylated.

The protein resides in the cytoplasm. It is found in the cell membrane. It carries out the reaction L-seryl-[protein] + ATP = O-phospho-L-seryl-[protein] + ADP + H(+). It catalyses the reaction L-threonyl-[protein] + ATP = O-phospho-L-threonyl-[protein] + ADP + H(+). Its function is as follows. Required for morphogenesis during multicellular development. Phosphorylates talB, gefN, gefS, PI4P 5-kinase and gacQ. This chain is Protein kinase 2 (pkgB), found in Dictyostelium discoideum (Social amoeba).